The primary structure comprises 256 residues: 3-hydroxy-5-phosphonooxypentane-2,4-dione thiolase (256 aa).

K168 acts as the Schiff-base intermediate with substrate in catalysis.

The protein belongs to the DeoC/FbaB aldolase family. Homodecamer.

It is found in the cytoplasm. The catalysed reaction is dihydroxyacetone phosphate + acetyl-CoA = 3-hydroxy-2,4-dioxopentyl phosphate + CoA. In terms of biological role, involved in the degradation of phospho-AI-2, thereby terminating induction of the lsr operon and closing the AI-2 signaling cycle. Catalyzes the transfer of an acetyl moiety from 3-hydroxy-5-phosphonooxypentane-2,4-dione to CoA to form glycerone phosphate and acetyl-CoA. The protein is 3-hydroxy-5-phosphonooxypentane-2,4-dione thiolase (lsrF) of Shigella flexneri.